Reading from the N-terminus, the 225-residue chain is Uridylate kinase (225 aa).

9 to 10 (GS) contacts ATP. Glycine 44 is a UMP binding site. ATP-binding residues include glycine 45 and arginine 49. UMP contacts are provided by residues aspartate 66 and 114 to 120 (THPGHTT). Positions 140, 141, 146, and 149 each coordinate ATP.

The protein belongs to the UMP kinase family. In terms of assembly, homohexamer.

It localises to the cytoplasm. It carries out the reaction UMP + ATP = UDP + ADP. The protein operates within pyrimidine metabolism; CTP biosynthesis via de novo pathway; UDP from UMP (UMPK route): step 1/1. With respect to regulation, inhibited by UTP. In terms of biological role, catalyzes the reversible phosphorylation of UMP to UDP. This is Uridylate kinase from Pyrococcus abyssi (strain GE5 / Orsay).